A 449-amino-acid polypeptide reads, in one-letter code: Ribulose bisphosphate carboxylase large chain (449 aa).

At Lys-7 the chain carries N6,N6,N6-trimethyllysine. 2 residues coordinate substrate: Asn-116 and Thr-166. Lys-168 (proton acceptor) is an active-site residue. Lys-170 is a substrate binding site. Residues Lys-194, Asp-196, and Glu-197 each coordinate Mg(2+). Lys-194 bears the N6-carboxylysine mark. His-287 functions as the Proton acceptor in the catalytic mechanism. Positions 288, 320, and 372 each coordinate substrate.

This sequence belongs to the RuBisCO large chain family. Type I subfamily. In terms of assembly, heterohexadecamer of 8 large chains and 8 small chains; disulfide-linked. The disulfide link is formed within the large subunit homodimers. Requires Mg(2+) as cofactor. Post-translationally, the disulfide bond which can form in the large chain dimeric partners within the hexadecamer appears to be associated with oxidative stress and protein turnover.

It localises to the plastid. Its subcellular location is the chloroplast. The enzyme catalyses 2 (2R)-3-phosphoglycerate + 2 H(+) = D-ribulose 1,5-bisphosphate + CO2 + H2O. The catalysed reaction is D-ribulose 1,5-bisphosphate + O2 = 2-phosphoglycolate + (2R)-3-phosphoglycerate + 2 H(+). Functionally, ruBisCO catalyzes two reactions: the carboxylation of D-ribulose 1,5-bisphosphate, the primary event in carbon dioxide fixation, as well as the oxidative fragmentation of the pentose substrate in the photorespiration process. Both reactions occur simultaneously and in competition at the same active site. This Liriope muscari (Big blue lilyturf) protein is Ribulose bisphosphate carboxylase large chain.